Consider the following 203-residue polypeptide: MIGRLRGIVLEKQPPLVLLEAGGVGYEVHMPMTCFYELPETGKEAVVFTHFVVREDAQLLFGFNNKQERTLFRELIKVNGVGPKLALAILSGMSAQQFVNAVEREEPAALVKLPGIGKKTAERLVVEMKDRFKGLHGDLFTPAADLVLTSPASPAVDDAEAEAVAALVSLGYKPQEASRMVSKVAQADASSETLIREALRAAL.

The interval Met1–Asn64 is domain I. A domain II region spans residues Asn65–Pro142. Positions Ala143–Pro154 are flexible linker. Residues Ala155 to Leu203 are domain III.

It belongs to the RuvA family. As to quaternary structure, homotetramer. Forms an RuvA(8)-RuvB(12)-Holliday junction (HJ) complex. HJ DNA is sandwiched between 2 RuvA tetramers; dsDNA enters through RuvA and exits via RuvB. An RuvB hexamer assembles on each DNA strand where it exits the tetramer. Each RuvB hexamer is contacted by two RuvA subunits (via domain III) on 2 adjacent RuvB subunits; this complex drives branch migration. In the full resolvosome a probable DNA-RuvA(4)-RuvB(12)-RuvC(2) complex forms which resolves the HJ.

The protein resides in the cytoplasm. Its function is as follows. The RuvA-RuvB-RuvC complex processes Holliday junction (HJ) DNA during genetic recombination and DNA repair, while the RuvA-RuvB complex plays an important role in the rescue of blocked DNA replication forks via replication fork reversal (RFR). RuvA specifically binds to HJ cruciform DNA, conferring on it an open structure. The RuvB hexamer acts as an ATP-dependent pump, pulling dsDNA into and through the RuvAB complex. HJ branch migration allows RuvC to scan DNA until it finds its consensus sequence, where it cleaves and resolves the cruciform DNA. This is Holliday junction branch migration complex subunit RuvA from Cronobacter sakazakii (strain ATCC BAA-894) (Enterobacter sakazakii).